Reading from the N-terminus, the 1198-residue chain is Structural polyprotein (1198 aa).

The segment at 2 to 15 (TKKPGGPGKNRAIN) is interaction with host EXOC1. Residues 37-72 (LLDGRGPVRFVLALITFFKFTALAPTKALLGRWKAV) form a hydrophobic; homodimerization of capsid protein C region. Positions 106–127 (GGNEGSIMWLASLAVVIACAGA) are cleaved as a propeptide — ER anchor for the capsid protein C, removed in mature form by serine protease NS3. Residues 110–130 (GSIMWLASLAVVIACAGAMKL) form a helical membrane-spanning segment. Asparagine 142 carries N-linked (GlcNAc...) asparagine; by host glycosylation. 2 consecutive transmembrane segments (helical) span residues 254-274 (WIIRNPGYAFLAAVLGWMLGS) and 280-294 (VVFTILLLLVAPAYS). Intrachain disulfides connect cysteine 297/cysteine 324, cysteine 354/cysteine 410, cysteine 354/cysteine 415, cysteine 368/cysteine 399, cysteine 386/cysteine 410, and cysteine 386/cysteine 415. Residues 392 to 405 (DRGWGNGCGLFGKG) are fusion peptide. The N-linked (GlcNAc...) asparagine; by host glycan is linked to asparagine 448. 2 disulfide bridges follow: cysteine 484–cysteine 581 and cysteine 598–cysteine 629. 2 consecutive transmembrane segments (helical) span residues 747–767 (FGGMSWITQGLMGALLLWMGV) and 774–794 (IALAFLATGGVLVFLATNVHA). Intrachain disulfides connect cysteine 798-cysteine 809, cysteine 849-cysteine 937, cysteine 973-cysteine 1017, cysteine 1074-cysteine 1123, cysteine 1085-cysteine 1106, and cysteine 1107-cysteine 1110. Asparagine 924 and asparagine 1001 each carry an N-linked (GlcNAc...) asparagine; by host glycan. The tract at residues 1151–1177 (MVDPFSAGPSGDVSGHPGSPSQEVDGQ) is disordered.

Homodimer. Interacts (via N-terminus) with host EXOC1 (via C-terminus); this interaction results in EXOC1 degradation through the proteasome degradation pathway. Interacts with host CAPRIN1; this interaction is involved in the suppression of the integrated stress response. In terms of assembly, forms heterodimers with envelope protein E in the endoplasmic reticulum and Golgi. As to quaternary structure, homodimer; in the endoplasmic reticulum and Golgi. Interacts with protein prM. Interacts with non-structural protein 1. Genome polyprotein: Specific enzymatic cleavages in vivo yield mature proteins. Cleavages in the lumen of endoplasmic reticulum are performed by host signal peptidase, whereas cleavages in the cytoplasmic side are performed by serine protease NS3. Signal cleavage at the 2K-4B site requires a prior NS3 protease-mediated cleavage at the 4A-2K site. In terms of processing, cleaved in post-Golgi vesicles by a host furin, releasing the mature small envelope protein M, and peptide pr. This cleavage is incomplete as up to 30% of viral particles still carry uncleaved prM. Post-translationally, N-glycosylated.

The protein resides in the secreted. Its subcellular location is the virion membrane. The protein localises to the host endoplasmic reticulum membrane. Its function is as follows. Plays a role in virus budding by binding to the cell membrane and gathering the viral RNA into a nucleocapsid that forms the core of a mature virus particle. During virus entry, may induce genome penetration into the host cytoplasm after hemifusion induced by the surface proteins. Can migrate to the cell nucleus where it modulates host functions. Overcomes the anti-viral effects of host EXOC1 by sequestering and degrading the latter through the proteasome degradation pathway. Inhibits the integrated stress response (ISR) in the infected cell by binding to host CAPRIN1. In terms of biological role, inhibits RNA silencing by interfering with host Dicer. Functionally, prevents premature fusion activity of envelope proteins in trans-Golgi by binding to envelope protein E at pH6.0. After virion release in extracellular space, gets dissociated from E dimers. Acts as a chaperone for envelope protein E during intracellular virion assembly by masking and inactivating envelope protein E fusion peptide. prM is the only viral peptide matured by host furin in the trans-Golgi network probably to avoid catastrophic activation of the viral fusion activity in acidic Golgi compartment prior to virion release. prM-E cleavage is inefficient, and many virions are only partially matured. These uncleaved prM would play a role in immune evasion. Its function is as follows. May play a role in virus budding. Exerts cytotoxic effects by activating a mitochondrial apoptotic pathway through M ectodomain. May display a viroporin activity. In terms of biological role, binds to host cell surface receptor and mediates fusion between viral and cellular membranes. Envelope protein is synthesized in the endoplasmic reticulum in the form of heterodimer with protein prM. They play a role in virion budding in the ER, and the newly formed immature particle is covered with 60 spikes composed of heterodimer between precursor prM and envelope protein E. The virion is transported to the Golgi apparatus where the low pH causes dissociation of PrM-E heterodimers and formation of E homodimers. prM-E cleavage is inefficient, and many virions are only partially matured. These uncleaved prM would play a role in immune evasion. Functionally, may play a role in neuroinvasiveness. This Ardeidae (herons) protein is Structural polyprotein.